The following is a 765-amino-acid chain: E3 ubiquitin-protein ligase SlrP (765 aa).

The interaction with target proteins stretch occupies residues 1–451 (MFNITNIQST…VDYQGPRVLF (451 aa)). 10 LRR repeats span residues 200–219 (QITT…ENLQ), 221–242 (NIKT…LPDT), 243–262 (IQEM…RLPS), 263–284 (ALQS…LPEE), 285–305 (LRYL…LPSG), 306–325 (ITHL…TLPP), 326–346 (GLKT…SLPP), 347–368 (ELQV…LPPT), 369–389 (ITTL…LPAA), and 390–410 (LQIM…LPHF). The linker stretch occupies residues 452-461 (AMGDFSIVRV). The interval 462 to 765 (TRPLHQAVQG…VSSLMSAYWR (304 aa)) is E3 ubiquitin-protein ligase catalytic domain. Residues 464-758 (PLHQAVQGWL…NILLKKEVSS (295 aa)) form the NEL domain. C546 (glycyl thioester intermediate) is an active-site residue.

The protein belongs to the LRR-containing bacterial E3 ligase family. Interacts with host TXN. Ubiquitinated in the presence of host E1 ubiquitin-activating enzyme, E2 ubiquitin-conjugating enzyme and ubiquitin.

It localises to the secreted. The protein resides in the host cytoplasm. It carries out the reaction S-ubiquitinyl-[E2 ubiquitin-conjugating enzyme]-L-cysteine + [acceptor protein]-L-lysine = [E2 ubiquitin-conjugating enzyme]-L-cysteine + N(6)-ubiquitinyl-[acceptor protein]-L-lysine.. Its activity is regulated as follows. Binding to TXN is inhibited by hydrogen peroxide in vitro. Effector proteins function to alter host cell physiology and promote bacterial survival in host tissues. This protein is an E3 ubiquitin ligase that interferes with host's ubiquitination pathway. Can ubiquitinate both ubiquitin and host TXN (thioredoxin). Leads to significant decrease of thioredoxin activity and increase of host cell death. The sequence is that of E3 ubiquitin-protein ligase SlrP (slrP) from Salmonella typhimurium (strain LT2 / SGSC1412 / ATCC 700720).